Reading from the N-terminus, the 61-residue chain is Large ribosomal subunit protein bL28 (61 aa).

It belongs to the bacterial ribosomal protein bL28 family.

This chain is Large ribosomal subunit protein bL28, found in Lacticaseibacillus paracasei (strain ATCC 334 / BCRC 17002 / CCUG 31169 / CIP 107868 / KCTC 3260 / NRRL B-441) (Lactobacillus paracasei).